The sequence spans 122 residues: Large ribosomal subunit protein bL12 (122 aa).

The protein belongs to the bacterial ribosomal protein bL12 family. As to quaternary structure, homodimer. Part of the ribosomal stalk of the 50S ribosomal subunit. Forms a multimeric L10(L12)X complex, where L10 forms an elongated spine to which 2 to 4 L12 dimers bind in a sequential fashion. Binds GTP-bound translation factors.

Its function is as follows. Forms part of the ribosomal stalk which helps the ribosome interact with GTP-bound translation factors. Is thus essential for accurate translation. In Actinobacillus succinogenes (strain ATCC 55618 / DSM 22257 / CCUG 43843 / 130Z), this protein is Large ribosomal subunit protein bL12.